Reading from the N-terminus, the 446-residue chain is Exodeoxyribonuclease 7 large subunit (446 aa).

The protein belongs to the XseA family. Heterooligomer composed of large and small subunits.

The protein resides in the cytoplasm. The enzyme catalyses Exonucleolytic cleavage in either 5'- to 3'- or 3'- to 5'-direction to yield nucleoside 5'-phosphates.. Functionally, bidirectionally degrades single-stranded DNA into large acid-insoluble oligonucleotides, which are then degraded further into small acid-soluble oligonucleotides. The polypeptide is Exodeoxyribonuclease 7 large subunit (Streptococcus pyogenes serotype M49 (strain NZ131)).